Consider the following 302-residue polypeptide: Beta-casein (302 aa).

Positions 1 to 15 (MKLLILTCLVALGFA) are cleaved as a signal peptide. Phosphoserine occurs at positions 23 and 25. 16 consecutive repeat copies span residues 144–151 (KREMLPIY), 152–159 (ERERLPAH), 160–167 (KRESLLAH), 168–175 (ERESLLAH), 176–182 (ERDILVP), 183–190 (QREMSFVP), 191–198 (EREFLFAS), 199–204 (ERVVLP), 205–214 (EQEKEILHND), 215–222 (EREVLAVH), 223–230 (KKEILPPF), 231–238 (EKEKVLPL), 241–247 (HRVVPLP), 248–255 (QREIVPPF), 256–262 (QRETLLP), and 263–269 (EEILPVN). The segment at 144–269 (KREMLPIYER…LLPEEILPVN (126 aa)) is 16 X approximate tandem repeats.

It belongs to the beta-casein family. Mammary gland specific. Secreted in milk.

The protein localises to the secreted. Functionally, important role in determination of the surface properties of the casein micelles. The sequence is that of Beta-casein (CSN2) from Notamacropus eugenii (Tammar wallaby).